Consider the following 115-residue polypeptide: U3-lycotoxin-Ls1a (115 aa).

The first 20 residues, 1–20, serve as a signal peptide directing secretion; the sequence is MKFVLLFGVLLVTLFSYSSA. Positions 21–44 are excised as a propeptide; the sequence is EMLDDFDQADEEELLSLIEKEEAR. 4 disulfide bridges follow: Cys48/Cys63, Cys55/Cys72, Cys62/Cys87, and Cys74/Cys85.

The protein belongs to the neurotoxin 19 (CSTX) family. 01 subfamily. As to expression, expressed by the venom gland.

The protein localises to the secreted. In Lycosa singoriensis (Wolf spider), this protein is U3-lycotoxin-Ls1a.